A 296-amino-acid polypeptide reads, in one-letter code: Acetylglutamate kinase (296 aa).

Substrate contacts are provided by residues 69–70 (GG), Arg91, and Asn193.

The protein belongs to the acetylglutamate kinase family. ArgB subfamily.

The protein localises to the cytoplasm. It carries out the reaction N-acetyl-L-glutamate + ATP = N-acetyl-L-glutamyl 5-phosphate + ADP. It functions in the pathway amino-acid biosynthesis; L-arginine biosynthesis; N(2)-acetyl-L-ornithine from L-glutamate: step 2/4. In terms of biological role, catalyzes the ATP-dependent phosphorylation of N-acetyl-L-glutamate. This is Acetylglutamate kinase from Paracidovorax citrulli (strain AAC00-1) (Acidovorax citrulli).